The following is a 98-amino-acid chain: NADH-ubiquinone oxidoreductase chain 4L (98 aa).

3 helical membrane passes run 1–21 (MSMV…GLLM), 29–49 (SLLC…VTIL), and 61–81 (IILL…LVMV).

It belongs to the complex I subunit 4L family. In terms of assembly, core subunit of respiratory chain NADH dehydrogenase (Complex I) which is composed of 45 different subunits.

Its subcellular location is the mitochondrion inner membrane. It catalyses the reaction a ubiquinone + NADH + 5 H(+)(in) = a ubiquinol + NAD(+) + 4 H(+)(out). In terms of biological role, core subunit of the mitochondrial membrane respiratory chain NADH dehydrogenase (Complex I) which catalyzes electron transfer from NADH through the respiratory chain, using ubiquinone as an electron acceptor. Part of the enzyme membrane arm which is embedded in the lipid bilayer and involved in proton translocation. This Callorhinus ursinus (Northern fur seal) protein is NADH-ubiquinone oxidoreductase chain 4L (MT-ND4L).